The following is a 345-amino-acid chain: N-acetyl-gamma-glutamyl-phosphate reductase (345 aa).

C149 is an active-site residue.

Belongs to the NAGSA dehydrogenase family. Type 1 subfamily.

It localises to the cytoplasm. It catalyses the reaction N-acetyl-L-glutamate 5-semialdehyde + phosphate + NADP(+) = N-acetyl-L-glutamyl 5-phosphate + NADPH + H(+). It participates in amino-acid biosynthesis; L-arginine biosynthesis; N(2)-acetyl-L-ornithine from L-glutamate: step 3/4. Catalyzes the NADPH-dependent reduction of N-acetyl-5-glutamyl phosphate to yield N-acetyl-L-glutamate 5-semialdehyde. In Bacillus cereus (strain 03BB102), this protein is N-acetyl-gamma-glutamyl-phosphate reductase.